Consider the following 261-residue polypeptide: Sugar fermentation stimulation protein homolog (261 aa).

The tract at residues 1-23 (MTDSAKPQNPDPGHESRRVAPLA) is disordered.

The protein belongs to the SfsA family.

This chain is Sugar fermentation stimulation protein homolog, found in Syntrophobacter fumaroxidans (strain DSM 10017 / MPOB).